Here is a 442-residue protein sequence, read N- to C-terminus: Coiled-coil domain-containing protein 91 (442 aa).

Residues 1 to 16 (MDDDDFGGFEAAETFD) form a GGA1-binding motif region. The segment at 1-27 (MDDDDFGGFEAAETFDGEQGGNQAVSP) is disordered. 2 positions are modified to phosphoserine: Ser43 and Ser46. 2 disordered regions span residues 48–80 (ELIL…ADSS) and 114–134 (HGAL…SNSQ). Coiled-coil stretches lie at residues 130-210 (VSNS…GHEA), 253-318 (HAQH…MKDV), and 346-408 (ARDQ…RRLD). The homodimerization stretch occupies residues 211–414 (LSIIVDEYKA…RRLDQVTRQR (204 aa)).

In terms of assembly, homodimer. Interacts with GGA1, GGA2 and AP1G1.

It localises to the membrane. The protein localises to the golgi apparatus. It is found in the trans-Golgi network membrane. The protein resides in the trans-Golgi network. In terms of biological role, involved in the regulation of membrane traffic through the trans-Golgi network (TGN). Functions in close cooperation with the GGAs in the sorting of hydrolases to lysosomes. The polypeptide is Coiled-coil domain-containing protein 91 (Ccdc91) (Mus musculus (Mouse)).